A 343-amino-acid chain; its full sequence is Aspartate-semialdehyde dehydrogenase (343 aa).

Residues 20–23 (SGAV) and 48–49 (RS) contribute to the NADP(+) site. Residue R108 coordinates phosphate. C137 serves as the catalytic Acyl-thioester intermediate. Q164 serves as a coordination point for substrate. An NADP(+)-binding site is contributed by 167–168 (SG). A phosphate-binding site is contributed by K221. A substrate-binding site is contributed by R243. The Proton acceptor role is filled by H250. NADP(+) is bound at residue Q323.

This sequence belongs to the aspartate-semialdehyde dehydrogenase family. As to quaternary structure, homodimer.

It catalyses the reaction L-aspartate 4-semialdehyde + phosphate + NADP(+) = 4-phospho-L-aspartate + NADPH + H(+). It functions in the pathway amino-acid biosynthesis; L-lysine biosynthesis via DAP pathway; (S)-tetrahydrodipicolinate from L-aspartate: step 2/4. The protein operates within amino-acid biosynthesis; L-methionine biosynthesis via de novo pathway; L-homoserine from L-aspartate: step 2/3. It participates in amino-acid biosynthesis; L-threonine biosynthesis; L-threonine from L-aspartate: step 2/5. Catalyzes the NADPH-dependent formation of L-aspartate-semialdehyde (L-ASA) by the reductive dephosphorylation of L-aspartyl-4-phosphate. The sequence is that of Aspartate-semialdehyde dehydrogenase from Prochlorococcus marinus (strain SARG / CCMP1375 / SS120).